Here is a 155-residue protein sequence, read N- to C-terminus: Transcriptional repressor NrdR (155 aa).

The segment at 3 to 34 (CPFCGHSSTQVLDSRVSEDGDTVRRRRRCEAC) is a zinc-finger region. Residues 49-139 (PAIVKKNGSR…VYRSFEDVSE (91 aa)) enclose the ATP-cone domain.

This sequence belongs to the NrdR family. Requires Zn(2+) as cofactor.

In terms of biological role, negatively regulates transcription of bacterial ribonucleotide reductase nrd genes and operons by binding to NrdR-boxes. This Cupriavidus metallidurans (strain ATCC 43123 / DSM 2839 / NBRC 102507 / CH34) (Ralstonia metallidurans) protein is Transcriptional repressor NrdR.